The primary structure comprises 586 residues: Homothallic switching endonuclease (586 aa).

In terms of domain architecture, DOD-type homing endonuclease spans 215 to 370; that stretch reads MLGLWLGDST…IVHISRSLGM (156 aa).

Post-translationally, rapidly degraded via the ubiquitin-26S proteasome system through two ubiquitin-conjugating enzymes UBC2/RAD6 and UBC3/CDC34.

The protein resides in the nucleus. In terms of biological role, initiation of mating type interconversion. This protein is a site-specific endonuclease that cleaves a site in the mat locus on chromosome III. The double-strand break is followed by a unidirectional gene conversion event that replaces the information at the mat locus by information copied from either of the two homologous loci (HMR and HML) that reside at the extremity of the chromosome III. Endonuclease expression takes place in late G1 just before cells enter S phase. The protein is Homothallic switching endonuclease (HO) of Saccharomyces cerevisiae (strain ATCC 204508 / S288c) (Baker's yeast).